The chain runs to 341 residues: tRNA uridine(34) hydroxylase (341 aa).

Residues 139–233 enclose the Rhodanese domain; sequence SDPEVVLVDT…YLEEVPSTET (95 aa). Cys-193 (cysteine persulfide intermediate) is an active-site residue. Basic and acidic residues-rich tracts occupy residues 306–316 and 324–341; these read SLAEERGESHI and IEER…QANK. Positions 306–341 are disordered; the sequence is SLAEERGESHIGGDIQNIIEERRQEKNDKKAKQANK.

This sequence belongs to the TrhO family.

The catalysed reaction is uridine(34) in tRNA + AH2 + O2 = 5-hydroxyuridine(34) in tRNA + A + H2O. In terms of biological role, catalyzes oxygen-dependent 5-hydroxyuridine (ho5U) modification at position 34 in tRNAs. The sequence is that of tRNA uridine(34) hydroxylase from Colwellia psychrerythraea (strain 34H / ATCC BAA-681) (Vibrio psychroerythus).